The primary structure comprises 316 residues: Methionyl-tRNA formyltransferase (316 aa).

S109 to P112 provides a ligand contact to (6S)-5,6,7,8-tetrahydrofolate.

The protein belongs to the Fmt family.

The enzyme catalyses L-methionyl-tRNA(fMet) + (6R)-10-formyltetrahydrofolate = N-formyl-L-methionyl-tRNA(fMet) + (6S)-5,6,7,8-tetrahydrofolate + H(+). Attaches a formyl group to the free amino group of methionyl-tRNA(fMet). The formyl group appears to play a dual role in the initiator identity of N-formylmethionyl-tRNA by promoting its recognition by IF2 and preventing the misappropriation of this tRNA by the elongation apparatus. This Idiomarina loihiensis (strain ATCC BAA-735 / DSM 15497 / L2-TR) protein is Methionyl-tRNA formyltransferase.